Here is a 560-residue protein sequence, read N- to C-terminus: MSNKVHVGSLEMEEGLSKTKWMVLEPSEKIKKIPKRLWNVGKEDPRRVIHALKVGLSLTLVSLLYLMEPLFKGIGSNAIWAVMTVVVVLEFSAGATLCKGLNRGLGTLIAGSLAFFIEFVANDSGKVLRAIFIGTAVFIIGAAATYIRFIPYIKKNYDYGVVIFLLTFNLITVSSYRVDSVINIAHDRFYTIAVGCGICLFMSLLVFPIWSGEDLHKTTVGKLQGLSRSIEACVDEYFEEKEKEKTDSKDRIYEGYQAVLDSKSTDETLALYANWEPRHTLRCHRFPCQQYVKVGAVLRQFGYTVVALHGCLQTEIQTPRSVRALFKDPCVRLAGEVCKALTELADSISNHRHCSPEILSDHLHVALQDLNSAIKSQPKLFLGSNLHRHNNKHQNGSISNNKHHQRNSSNSGKDLNGDVSLQNTETGTRKITETGSRQGQNGAVSLSSFRTDTSALMEYRRSFKNSNSEMSAAGERRMLRPQLSKIAVMTSLEFSEALPFAAFASLLVEMVARLDNVIEEVEELGRIASFKEYDNKRDQTADDVRCENPANVTISVGAAE.

A run of 6 helical transmembrane segments spans residues 54–74 (VGLSLTLVSLLYLMEPLFKGI), 78–98 (AIWAVMTVVVVLEFSAGATLC), 104–124 (GLGTLIAGSLAFFIEFVANDS), 130–150 (AIFIGTAVFIIGAAATYIRFI), 156–176 (NYDYGVVIFLLTFNLITVSSY), and 189–209 (FYTIAVGCGICLFMSLLVFPI). Residues 386-421 (LHRHNNKHQNGSISNNKHHQRNSSNSGKDLNGDVSL) are disordered. The span at 407 to 421 (NSSNSGKDLNGDVSL) shows a compositional bias: polar residues.

This sequence belongs to the aromatic acid exporter (TC 2.A.85) family. Expressed in roots, stems, leaves, flowers and pollen. Mainly detected in the roots vascular stele and in the leaves guard cells.

Its subcellular location is the cell membrane. Its function is as follows. Malate-sensitive anion transporter permeable to chloride, nitrate, sulfate and malate. Involved in dark-, CO(2)-, abscisic acid- and water-deficient-induced stomatal closure. Belongs to the R-type anion channels. The sequence is that of Aluminum-activated malate transporter 12 (ALMT12) from Arabidopsis thaliana (Mouse-ear cress).